A 163-amino-acid chain; its full sequence is MSDPLHVTFVCTGNICRSPMAEKMFAQQLRHRGLGDAVRVTSAGTGNWHVGSCADERAAGVLRAHGYPTDHRAAQVGTEHLAADLLVALDRNHARLLRQLGVEAARVRMLRSFDPRSGTHALDVEDPYYGDHSDFEEVFAVIESALPGLHDWVDERLARNGPS.

Residue Cys11 is the Nucleophile of the active site. Residue Arg17 is part of the active site. Asp126 (proton donor) is an active-site residue.

The protein belongs to the low molecular weight phosphotyrosine protein phosphatase family.

The enzyme catalyses O-phospho-L-tyrosyl-[protein] + H2O = L-tyrosyl-[protein] + phosphate. Key virulence factor required for mycobacterial survival within host macrophages. Exhibits protein tyrosine phosphatase activity. In terms of biological role, supports mycobacteria survival during infection by modulation of the phagosome maturation and modulation of the normal host signaling pathways, including host innate immune responses and cell apoptosis. The sequence is that of Low molecular weight protein-tyrosine phosphatase A (ptpA) from Mycobacterium bovis (strain ATCC BAA-935 / AF2122/97).